The chain runs to 158 residues: Transcription elongation factor GreA (158 aa).

Residues 41–61 (GDLSENAEYHAAKEDQSHNEG) are disordered. The stretch at 51–74 (AAKEDQSHNEGRIAELEDKLARAE) forms a coiled coil.

This sequence belongs to the GreA/GreB family.

Necessary for efficient RNA polymerase transcription elongation past template-encoded arresting sites. The arresting sites in DNA have the property of trapping a certain fraction of elongating RNA polymerases that pass through, resulting in locked ternary complexes. Cleavage of the nascent transcript by cleavage factors such as GreA or GreB allows the resumption of elongation from the new 3'terminus. GreA releases sequences of 2 to 3 nucleotides. The sequence is that of Transcription elongation factor GreA from Nitrobacter hamburgensis (strain DSM 10229 / NCIMB 13809 / X14).